Here is a 32-residue protein sequence, read N- to C-terminus: uncharacterized protein (32 aa).

This is an uncharacterized protein from Haloarcula hispanica (His1V).